A 1006-amino-acid polypeptide reads, in one-letter code: MSAYYRNNWSEEDPDYPDYSGSQNRTQGYLKTQGYPDVPGPLNNPDYPGTRSNPYSVASRTRPDYPGSLAEPNYPRSLSNPDYSGTRSNAYSAASRTSPDHPTSLPEPDYSEFQSHPYHRASSRQPDYPGSQRNPDFAGSSSSGNYAGSRTHPDHFGSLEPDYPGAQSNSDHPGPRANLNHPGSRKNLEHTSFRINPYADSLGKPDYPGADIQPNSPPFFGEPDYPSAEDNQNLPSTWREPDYSDAENGHDYGSSETPKMTRGVLSRTSSIQPSFRHRSDDPVGSLWGENDYPEGIEMASMEMANSYGHSLPGAPGSGYVNPAYVGESGPVHAYGNPPLSECDWHKSPQGQKLIASLIPMTSRDRIKAIRNQPRTMEEKRNLRKIVDKEKSKQTHRILQLNCCIQCLNSISRAYRRSKNSLSEILNSISLWQKTLKIIGGKFGTSVLSYFNFLRWLLKFNIFSFILNFSFIIIPQFTVAKKNTLQFTGLEFFTGVGYFRDTVMYYGFYTNSTIQHGNSGASYNMQLAYIFTIGACLTTCFFSLLFSMAKYFRNNFINPHIYSGGITKLIFCWDFTVTHEKAVKLKQKNLSTEIRENLSELRQENSKLTFNQLLTRFSAYMVAWVVSTGVAIACCAAVYYLAEYNLEFLKTHSNPGAVLLLPFVVSCINLAVPCIYSMFRLVERYEMPRHEVYVLLIRNIFLKISIIGILCYYWLNTVALSGEECWETLIGQDIYRLLLMDFVFSLVNSFLGEFLRRIIGMQLITSLGLQEFDIARNVLELIYAQTLVWIGIFFCPLLPFIQMIMLFIMFYSKNISLMMNFQPPSKAWRASQMMTFFIFLLFFPSFTGVLCTLAITIWRLKPSADCGPFRGLPLFIHSIYSWIDTLSTRPGYLWVVWIYRNLIGSVHFFFILTLIVLIITYLYWQITEGRKIMIRLLHEQIINEGKDKMFLIEKLIKLQDMEKKANPSSLVLERREVEQQGFLHLGEHDGSLDLRSRRSVQEGNPRA.

The segment at 1-289 (MSAYYRNNWS…DDPVGSLWGE (289 aa)) is disordered. Residues 1-458 (MSAYYRNNWS…YFNFLRWLLK (458 aa)) lie on the Extracellular side of the membrane. 3 stretches are compositionally biased toward polar residues: residues 20–30 (SGSQNRTQGYL), 50–59 (TRSNPYSVAS), and 76–101 (RSLS…SPDH). Over residues 138-149 (AGSSSSGNYAGS) the composition is skewed to low complexity. The segment covering 239 to 250 (REPDYSDAENGH) has biased composition (basic and acidic residues). Residues 459–479 (FNIFSFILNFSFIIIPQFTVA) traverse the membrane as a helical segment. The Cytoplasmic segment spans residues 480–485 (KKNTLQ). The helical transmembrane segment at 486–508 (FTGLEFFTGVGYFRDTVMYYGFY) threads the bilayer. At 509-525 (TNSTIQHGNSGASYNMQ) the chain is on the extracellular side. Residues 526-546 (LAYIFTIGACLTTCFFSLLFS) form a helical membrane-spanning segment. The Cytoplasmic segment spans residues 547–619 (MAKYFRNNFI…NQLLTRFSAY (73 aa)). The helical transmembrane segment at 620 to 640 (MVAWVVSTGVAIACCAAVYYL) threads the bilayer. Residues 641-654 (AEYNLEFLKTHSNP) are Extracellular-facing. A helical transmembrane segment spans residues 655–675 (GAVLLLPFVVSCINLAVPCIY). The Cytoplasmic segment spans residues 676–698 (SMFRLVERYEMPRHEVYVLLIRN). Residues 699-719 (IFLKISIIGILCYYWLNTVAL) traverse the membrane as a helical segment. Over 720–732 (SGEECWETLIGQD) the chain is Extracellular. A helical transmembrane segment spans residues 733-753 (IYRLLLMDFVFSLVNSFLGEF). Residues 754–786 (LRRIIGMQLITSLGLQEFDIARNVLELIYAQTL) lie on the Cytoplasmic side of the membrane. A helical transmembrane segment spans residues 787-807 (VWIGIFFCPLLPFIQMIMLFI). The Extracellular segment spans residues 808–835 (MFYSKNISLMMNFQPPSKAWRASQMMTF). The chain crosses the membrane as a helical span at residues 836-856 (FIFLLFFPSFTGVLCTLAITI). Residues 857–900 (WRLKPSADCGPFRGLPLFIHSIYSWIDTLSTRPGYLWVVWIYRN) are Cytoplasmic-facing. The chain crosses the membrane as a helical span at residues 901–921 (LIGSVHFFFILTLIVLIITYL). Residues 922–1006 (YWQITEGRKI…RSVQEGNPRA (85 aa)) lie on the Extracellular side of the membrane.

The protein belongs to the TMC family.

Its subcellular location is the membrane. Functionally, probable component of an ion channel. Molecular function hasn't been characterized yet. The protein is Transmembrane channel-like protein 5 of Homo sapiens (Human).